Consider the following 234-residue polypeptide: Uridylate kinase (234 aa).

ATP is bound at residue 9-12 (KLSG). Gly-51 contacts UMP. Gly-52 and Arg-56 together coordinate ATP. UMP-binding positions include Asp-71 and 132-139 (CGNPFFTT). ATP-binding residues include Thr-159, Tyr-165, and Asp-168.

The protein belongs to the UMP kinase family. Homohexamer.

The protein resides in the cytoplasm. The enzyme catalyses UMP + ATP = UDP + ADP. The protein operates within pyrimidine metabolism; CTP biosynthesis via de novo pathway; UDP from UMP (UMPK route): step 1/1. With respect to regulation, inhibited by UTP. Catalyzes the reversible phosphorylation of UMP to UDP. This chain is Uridylate kinase, found in Prochlorococcus marinus (strain MIT 9515).